The chain runs to 458 residues: Phosphoglucosamine mutase (458 aa).

Catalysis depends on Ser106, which acts as the Phosphoserine intermediate. 4 residues coordinate Mg(2+): Ser106, Asp247, Asp249, and Asp251. Ser106 bears the Phosphoserine mark.

Belongs to the phosphohexose mutase family. It depends on Mg(2+) as a cofactor. In terms of processing, activated by phosphorylation.

The enzyme catalyses alpha-D-glucosamine 1-phosphate = D-glucosamine 6-phosphate. In terms of biological role, catalyzes the conversion of glucosamine-6-phosphate to glucosamine-1-phosphate. This Chlamydia pneumoniae (Chlamydophila pneumoniae) protein is Phosphoglucosamine mutase.